A 234-amino-acid polypeptide reads, in one-letter code: Sugar fermentation stimulation protein A (234 aa).

Positions 201–220 (LLSEAQQRGVEILAYKAEIS) form a DNA-binding region, H-T-H motif.

This sequence belongs to the SfsA family.

Functionally, binds to DNA non-specifically. Could be a regulatory factor involved in maltose metabolism. The chain is Sugar fermentation stimulation protein A from Escherichia coli (strain 55989 / EAEC).